Consider the following 56-residue polypeptide: Large ribosomal subunit protein eL37 (56 aa).

The Zn(2+) site is built by C19, C22, C34, and C37. The C4-type zinc finger occupies 19–37 (CRRCGSVSFNVHTKQCTSC).

Belongs to the eukaryotic ribosomal protein eL37 family. Requires Zn(2+) as cofactor.

Its function is as follows. Binds to the 23S rRNA. The polypeptide is Large ribosomal subunit protein eL37 (rpl37e) (Methanosarcina acetivorans (strain ATCC 35395 / DSM 2834 / JCM 12185 / C2A)).